The primary structure comprises 294 residues: tRNA dimethylallyltransferase (294 aa).

10 to 17 is a binding site for ATP; that stretch reads GPTAVGKT. A substrate-binding site is contributed by 12–17; the sequence is TAVGKT. Positions 35–38 are interaction with substrate tRNA; that stretch reads DSQQ.

This sequence belongs to the IPP transferase family. In terms of assembly, monomer. It depends on Mg(2+) as a cofactor.

The catalysed reaction is adenosine(37) in tRNA + dimethylallyl diphosphate = N(6)-dimethylallyladenosine(37) in tRNA + diphosphate. Functionally, catalyzes the transfer of a dimethylallyl group onto the adenine at position 37 in tRNAs that read codons beginning with uridine, leading to the formation of N6-(dimethylallyl)adenosine (i(6)A). This is tRNA dimethylallyltransferase from Streptococcus gordonii (strain Challis / ATCC 35105 / BCRC 15272 / CH1 / DL1 / V288).